The primary structure comprises 123 residues: WAP four-disulfide core domain protein 5 (123 aa).

The N-terminal stretch at 1–24 (MRIQSLLLLGALLAVGSQPPAAFG) is a signal peptide. 2 WAP domains span residues 27-73 (KGEK…CVPR) and 74-121 (VSVK…RDPV). 8 cysteine pairs are disulfide-bonded: Cys34/Cys62, Cys41/Cys66, Cys49/Cys61, Cys55/Cys70, Cys81/Cys109, Cys88/Cys113, Cys96/Cys108, and Cys102/Cys117.

It is found in the secreted. Putative acid-stable proteinase inhibitor. This chain is WAP four-disulfide core domain protein 5 (WFDC5), found in Aotus nancymaae (Ma's night monkey).